The primary structure comprises 438 residues: uncharacterized protein (438 aa).

His59 serves as a coordination point for Zn(2+). The active-site Proton acceptor is the Glu62. Zn(2+)-binding residues include His63 and Glu139.

This sequence belongs to the peptidase M16 family. The cofactor is Zn(2+).

This is an uncharacterized protein from Mycobacterium bovis (strain ATCC BAA-935 / AF2122/97).